Here is a 137-residue protein sequence, read N- to C-terminus: uncharacterized protein (137 aa).

Residues 20-42 (TVLAFKGEGALALAGLLVMAAVA) form a helical membrane-spanning segment.

Its subcellular location is the host membrane. This is an uncharacterized protein from Dryophytes versicolor (chameleon treefrog).